Here is a 449-residue protein sequence, read N- to C-terminus: Putative methylthiotransferase MJ0865 (449 aa).

In terms of domain architecture, Radical SAM core spans 163–390 (SIRGANVYIE…EGEYRKLGLS (228 aa)). The [4Fe-4S] cluster site is built by C177, C181, and C184.

The protein belongs to the methylthiotransferase family. The cofactor is [4Fe-4S] cluster.

This chain is Putative methylthiotransferase MJ0865, found in Methanocaldococcus jannaschii (strain ATCC 43067 / DSM 2661 / JAL-1 / JCM 10045 / NBRC 100440) (Methanococcus jannaschii).